A 373-amino-acid polypeptide reads, in one-letter code: 3 beta-hydroxysteroid dehydrogenase/Delta 5--&gt;4-isomerase (373 aa).

Residue tyrosine 155 is the Proton acceptor of the active site. Lysine 159 provides a ligand contact to NAD(+). A helical transmembrane segment spans residues 288–308 (ISLQYWLAFLLEIVSFLLSPI).

The protein belongs to the 3-beta-HSD family.

Its subcellular location is the endoplasmic reticulum membrane. The protein resides in the mitochondrion membrane. It carries out the reaction a 3beta-hydroxy-Delta(5)-steroid + NAD(+) = a 3-oxo-Delta(5)-steroid + NADH + H(+). The catalysed reaction is a 3-oxo-Delta(5)-steroid = a 3-oxo-Delta(4)-steroid. It functions in the pathway lipid metabolism; steroid biosynthesis. 3-beta-HSD is a bifunctional enzyme, that catalyzes the oxidative conversion of Delta(5)-ene-3-beta-hydroxy steroid, and the oxidative conversion of ketosteroids. The 3-beta-HSD enzymatic system plays a crucial role in the biosynthesis of all classes of hormonal steroids. In Bos taurus (Bovine), this protein is 3 beta-hydroxysteroid dehydrogenase/Delta 5--&gt;4-isomerase (HSD3B).